The chain runs to 436 residues: tRNA (guanine(37)-N(1))-methyltransferase 1 (436 aa).

Residues histidine 229, 277 to 278 (DL), and asparagine 325 contribute to the S-adenosyl-L-methionine site.

The protein belongs to the class I-like SAM-binding methyltransferase superfamily. TRM5/TYW2 family. Monomer.

It is found in the mitochondrion matrix. Its subcellular location is the nucleus. It localises to the cytoplasm. It carries out the reaction guanosine(37) in tRNA + S-adenosyl-L-methionine = N(1)-methylguanosine(37) in tRNA + S-adenosyl-L-homocysteine + H(+). Specifically methylates the N1 position of guanosine-37 in various cytoplasmic and mitochondrial tRNAs. Methylation is not dependent on the nature of the nucleoside 5' of the target nucleoside. This is the first step in the biosynthesis of wybutosine (yW), a modified base adjacent to the anticodon of tRNAs and required for accurate decoding. The chain is tRNA (guanine(37)-N(1))-methyltransferase 1 from Phaeodactylum tricornutum (strain CCAP 1055/1).